The sequence spans 432 residues: Cyclic di-GMP phosphodiesterase CdgJ (432 aa).

Residues 1-232 enclose the EAL domain; that stretch reads MVRCLWAAEC…QRYVSPEHVI (232 aa). The region spanning 226–413 is the HDOD domain; the sequence is VSPEHVIAMQ…CLELGFDLED (188 aa).

The catalysed reaction is 3',3'-c-di-GMP + H2O = 5'-phosphoguanylyl(3'-&gt;5')guanosine + H(+). Its function is as follows. Phosphodiesterase (PDE) that catalyzes the hydrolysis of cyclic diguanylate (c-di-GMP). Positively regulates motility and negatively regulates biofilm formation. The chain is Cyclic di-GMP phosphodiesterase CdgJ from Vibrio cholerae serotype O1 (strain ATCC 39315 / El Tor Inaba N16961).